Here is a 167-residue protein sequence, read N- to C-terminus: Interferon gamma (167 aa).

The first 23 residues, 1–23, serve as a signal peptide directing secretion; the sequence is MNYTGYLLAFQLCIILGSSSCYC. Q24 is modified (pyrrolidone carboxylic acid). N39 and N105 each carry an N-linked (GlcNAc...) asparagine glycan. A disordered region spans residues 148-167; it reads SNLRKRKRSQSTFHGRRASI. The span at 149–167 shows a compositional bias: basic residues; it reads NLRKRKRSQSTFHGRRASI.

The protein belongs to the type II (or gamma) interferon family. In terms of assembly, homodimer. Interacts with IFNGR1 (via extracellular domain); this interaction promotes IFNGR1 dimerization. Released primarily from activated T lymphocytes.

It is found in the secreted. Its function is as follows. Type II interferon produced by immune cells such as T-cells and NK cells that plays crucial roles in antimicrobial, antiviral, and antitumor responses by activating effector immune cells and enhancing antigen presentation. Primarily signals through the JAK-STAT pathway after interaction with its receptor IFNGR1 to affect gene regulation. Upon IFNG binding, IFNGR1 intracellular domain opens out to allow association of downstream signaling components JAK2, JAK1 and STAT1, leading to STAT1 activation, nuclear translocation and transcription of IFNG-regulated genes. Many of the induced genes are transcription factors such as IRF1 that are able to further drive regulation of a next wave of transcription. Plays a role in class I antigen presentation pathway by inducing a replacement of catalytic proteasome subunits with immunoproteasome subunits. In turn, increases the quantity, quality, and repertoire of peptides for class I MHC loading. Increases the efficiency of peptide generation also by inducing the expression of activator PA28 that associates with the proteasome and alters its proteolytic cleavage preference. Up-regulates as well MHC II complexes on the cell surface by promoting expression of several key molecules such as cathepsins B/CTSB, H/CTSH, and L/CTSL. Participates in the regulation of hematopoietic stem cells during development and under homeostatic conditions by affecting their development, quiescence, and differentiation. In Dasypus novemcinctus (Nine-banded armadillo), this protein is Interferon gamma (IFNG).